Here is a 110-residue protein sequence, read N- to C-terminus: Ribonuclease P protein component 4 (110 aa).

Positions 65, 68, 94, and 97 each coordinate Zn(2+).

Belongs to the eukaryotic/archaeal RNase P protein component 4 family. Consists of a catalytic RNA component and at least 5 protein subunits. Requires Zn(2+) as cofactor.

The protein resides in the cytoplasm. The catalysed reaction is Endonucleolytic cleavage of RNA, removing 5'-extranucleotides from tRNA precursor.. Part of ribonuclease P, a protein complex that generates mature tRNA molecules by cleaving their 5'-ends. In Methanococcus maripaludis (strain DSM 14266 / JCM 13030 / NBRC 101832 / S2 / LL), this protein is Ribonuclease P protein component 4.